Consider the following 157-residue polypeptide: uncharacterized protein (157 aa).

4 helical membrane-spanning segments follow: residues 3–23 (IFSF…MFIS), 24–44 (AFLS…ALAV), 47–67 (LMLG…ATAG), and 105–125 (IALL…IAGW).

This sequence to E.coli YqaA.

The protein localises to the cell membrane. This is an uncharacterized protein from Haemophilus influenzae (strain ATCC 51907 / DSM 11121 / KW20 / Rd).